Reading from the N-terminus, the 548-residue chain is T-complex protein 1 subunit theta (548 aa).

The disordered stretch occupies residues 528 to 548; it reads ATGGPKPRGPKQQDEDDDGMA.

It belongs to the TCP-1 chaperonin family. Heterooligomeric complex.

The protein localises to the cytoplasm. In terms of biological role, molecular chaperone; assists the folding of proteins upon ATP hydrolysis. Known to play a role, in vitro, in the folding of actin and tubulin. Required for correct subcellular localization of pgl-1. The polypeptide is T-complex protein 1 subunit theta (Caenorhabditis briggsae).